A 409-amino-acid chain; its full sequence is Ligand-gated cation channel ZACN (409 aa).

An N-terminal signal peptide occupies residues 1 to 18 (MAPRLLLLLLAFLRLGTT). Residues 19-233 (GPLVQGRGFR…LRLQNTALKA (215 aa)) are Extracellular-facing. N55 and N99 each carry an N-linked (GlcNAc...) asparagine glycan. C157 and C171 form a disulfide bridge. A helical membrane pass occupies residues 234–254 (IIALLVPGEALLLADMCGGLL). Residues 255-265 (PLRATERIAYK) are Cytoplasmic-facing. The chain crosses the membrane as a helical span at residues 266–286 (VTLLLGYLVFHSSLVQALPSS). Over 287–296 (SSCNPLLIYY) the chain is Extracellular. A helical transmembrane segment spans residues 297 to 317 (FTVLLLLLFISTMETVLLAAL). The Cytoplasmic segment spans residues 318-365 (QARGHLSARSSPIPTPRGEQQDHGDLGPHPEEAPGVKESRSWAEAADH). Positions 325–354 (ARSSPIPTPRGEQQDHGDLGPHPEEAPGVK) are disordered. Positions 336–354 (EQQDHGDLGPHPEEAPGVK) are enriched in basic and acidic residues. A helical transmembrane segment spans residues 366 to 386 (IFFLVYVVGVVCSQFFFIGFW). At 387–409 (MWATCKSDPAPGEAIPHGGQPRL) the chain is on the extracellular side.

The protein belongs to the ligand-gated ion channel (TC 1.A.9) family. In terms of processing, glycosylated.

The protein resides in the cell membrane. It catalyses the reaction Na(+)(in) = Na(+)(out). It carries out the reaction K(+)(in) = K(+)(out). Functionally, ligand-gated cation channel that allows the movement of sodium and potassium monoatomic cations across cell membranes when activated by zinc (Zn2+), copper (Cu2+), and changes in pH. Could also transport cesium. This is Ligand-gated cation channel ZACN from Canis lupus familiaris (Dog).